The sequence spans 910 residues: Protein translocase subunit SecA (910 aa).

ATP is bound by residues Gln-89, 107 to 111, and Asp-496; that span reads GEGKT. Residues 873–910 are disordered; sequence QEFSGGNLNRSQSNGSSVTVTTSSGGGTERKTSRRRKR. Residues 876–886 are compositionally biased toward polar residues; that stretch reads SGGNLNRSQSN.

It belongs to the SecA family. As to quaternary structure, monomer and homodimer. Part of the essential Sec protein translocation apparatus which comprises SecA, SecYEG and auxiliary proteins SecDF. Other proteins may also be involved.

It is found in the cell inner membrane. The protein localises to the cytoplasm. It catalyses the reaction ATP + H2O + cellular proteinSide 1 = ADP + phosphate + cellular proteinSide 2.. Functionally, part of the Sec protein translocase complex. Interacts with the SecYEG preprotein conducting channel. Has a central role in coupling the hydrolysis of ATP to the transfer of proteins into and across the cell membrane, serving as an ATP-driven molecular motor driving the stepwise translocation of polypeptide chains across the membrane. In Leptospira interrogans serogroup Icterohaemorrhagiae serovar copenhageni (strain Fiocruz L1-130), this protein is Protein translocase subunit SecA.